Here is a 123-residue protein sequence, read N- to C-terminus: uncharacterized protein (123 aa).

A signal peptide spans 1 to 24; it reads MLPLCLTFLSFFLSLGGSFKAVMT. Transmembrane regions (helical) follow at residues 39–59 and 101–121; these read FWIFNWTVTLIPLNSLVALAI and FGGILTIDLSFYWALGVALTG.

It is found in the membrane. This is an uncharacterized protein from Saccharomyces cerevisiae (strain ATCC 204508 / S288c) (Baker's yeast).